Reading from the N-terminus, the 196-residue chain is Holliday junction branch migration complex subunit RuvA (196 aa).

Residues 1 to 61 (MYEYFEGIVT…DTGITLYGFQ (61 aa)) form a domain I region. The tract at residues 62 to 140 (SEDDKGLFLK…DYVARLDRQD (79 aa)) is domain II. The segment at 141–149 (EEQGNISPA) is flexible linker. The tract at residues 149-196 (ALNDALLALIALGYTQKEVDRITTKLEEVNADTADQYIKKGLALLLKK) is domain III.

Belongs to the RuvA family. Homotetramer. Forms an RuvA(8)-RuvB(12)-Holliday junction (HJ) complex. HJ DNA is sandwiched between 2 RuvA tetramers; dsDNA enters through RuvA and exits via RuvB. An RuvB hexamer assembles on each DNA strand where it exits the tetramer. Each RuvB hexamer is contacted by two RuvA subunits (via domain III) on 2 adjacent RuvB subunits; this complex drives branch migration. In the full resolvosome a probable DNA-RuvA(4)-RuvB(12)-RuvC(2) complex forms which resolves the HJ.

It localises to the cytoplasm. In terms of biological role, the RuvA-RuvB-RuvC complex processes Holliday junction (HJ) DNA during genetic recombination and DNA repair, while the RuvA-RuvB complex plays an important role in the rescue of blocked DNA replication forks via replication fork reversal (RFR). RuvA specifically binds to HJ cruciform DNA, conferring on it an open structure. The RuvB hexamer acts as an ATP-dependent pump, pulling dsDNA into and through the RuvAB complex. HJ branch migration allows RuvC to scan DNA until it finds its consensus sequence, where it cleaves and resolves the cruciform DNA. The chain is Holliday junction branch migration complex subunit RuvA from Lactobacillus helveticus (strain DPC 4571).